The chain runs to 294 residues: Putative isocitrate dehydrogenase [NAD] subunit-like 4 (294 aa).

It belongs to the isocitrate and isopropylmalate dehydrogenases family.

In terms of biological role, performs an essential role in the oxidative function of the citric acid cycle. This Arabidopsis thaliana (Mouse-ear cress) protein is Putative isocitrate dehydrogenase [NAD] subunit-like 4 (IDH4).